Reading from the N-terminus, the 307-residue chain is ATP synthase gamma chain (307 aa).

It belongs to the ATPase gamma chain family. F-type ATPases have 2 components, CF(1) - the catalytic core - and CF(0) - the membrane proton channel. CF(1) has five subunits: alpha(3), beta(3), gamma(1), delta(1), epsilon(1). CF(0) has three main subunits: a, b and c.

Its subcellular location is the cell membrane. Its function is as follows. Produces ATP from ADP in the presence of a proton gradient across the membrane. The gamma chain is believed to be important in regulating ATPase activity and the flow of protons through the CF(0) complex. The polypeptide is ATP synthase gamma chain (Bifidobacterium longum subsp. infantis (strain ATCC 15697 / DSM 20088 / JCM 1222 / NCTC 11817 / S12)).